The following is a 424-amino-acid chain: MDDRLSSQLEHYASQVTASATLIIRHLKSLKDEPSTLPSQTSVPTAVGTAQLRLAEAAFQLLHFTRDPGNVLTQLTVDLQVISAVRWLLHFEIFSLVPLEGSISYHELSSVANVPENLLRSHIRLAMTCHLFQESGPIGMVAHSPVSRQLASDPSLVSWGQYFANSVFPTATKNVNATAAWPGSKALNETAHNLAFNHHGSFFDYVSQDPARTVEFANSMKAVSTTSLFDTCHLCKSFDWSSLGDGVVVDMGGSTGHVSIALAESFPSLRFVVQDLPDVVSNSIRQLEERQLPLSVTTRIQFQGHSLLHMQPVKGAAVYLLRQILHDWPDREAVQILRSIVPALGPSSKIFIADIVLPEAGSIPATEEQVMRCNDLLLHQFTNTLERTLEDWQAIVSRVSDNLRIQHVYRDPGSILSLLVIETV.

Aspartate 275 provides a ligand contact to S-adenosyl-L-methionine. Histidine 326 serves as the catalytic Proton acceptor.

The protein belongs to the class I-like SAM-binding methyltransferase superfamily. Cation-independent O-methyltransferase family.

It functions in the pathway secondary metabolite biosynthesis. In terms of biological role, O-methyltransferase; part of the gene cluster that mediates the biosynthesis of aurasperone B, a dimeric gamma-naphthopyrone. The first step in the biosynthesis of aurasperone B is the production of gamma-naphthopyrone precursor YWA1 by the non-reducing polyketide synthase albA, via condensation of one acetyl-CoA starter unit with 6 malonyl-CoA units. YWA1 is then methylated by aunE at position C-6 to yield foncesin which is further methylated at position C-8 by aunD to produce fonsecin B. A key enzyme in the biosynthetic pathway is the cytochrome P450 monooxygenase aunB which catalyzes the oxidative dimerization of fonsecin B to aurasperone B. AunB also catalyzes the oxidative dimerization of rubrofusarin B into aurasperone A. This is O-methyltransferase aunD from Aspergillus niger (strain ATCC MYA-4892 / CBS 513.88 / FGSC A1513).